The primary structure comprises 423 residues: Sorting nexin-4 (423 aa).

Residues 1–21 are compositionally biased toward basic and acidic residues; sequence MTDKGKNDLTSKAKDKARGNP. The tract at residues 1–25 is disordered; sequence MTDKGKNDLTSKAKDKARGNPEKPP. A PX domain is found at 29–157; sequence EIIVSDPQKR…TFLVSKDWES (129 aa). Residues Arg78, Ser80, Lys104, and Arg123 each coordinate a 1,2-diacyl-sn-glycero-3-phospho-(1D-myo-inositol-3-phosphate). Coiled-coil stretches lie at residues 217 to 252 and 346 to 381; these read KKND…AKLK and SRRE…ECLK.

This sequence belongs to the sorting nexin family. In terms of assembly, forms a complex with ATG20 and ATG17. Binds also to SNC1 and SNX41.

The protein resides in the cytoplasm. It localises to the cytosol. The protein localises to the preautophagosomal structure membrane. It is found in the endosome membrane. Functionally, sorting nexin, involved in the separation or division of vacuoles throughout the entire life cycle of the cells. Involved in retrieval of late-Golgi SNAREs from post-Golgi endosomes to the trans-Golgi network, for cytoplasm to vacuole transport (Cvt), and autophagy of large cargos including mitophagy, pexophagy and glycophagy. Involved in proper sorting of the v-SNARE protein SNC1. In Saccharomyces cerevisiae (strain ATCC 204508 / S288c) (Baker's yeast), this protein is Sorting nexin-4.